Consider the following 235-residue polypeptide: Large ribosomal subunit protein uL3 (235 aa).

The protein belongs to the universal ribosomal protein uL3 family. Part of the 50S ribosomal subunit. Forms a cluster with proteins L14 and L19.

In terms of biological role, one of the primary rRNA binding proteins, it binds directly near the 3'-end of the 23S rRNA, where it nucleates assembly of the 50S subunit. The polypeptide is Large ribosomal subunit protein uL3 (Frankia casuarinae (strain DSM 45818 / CECT 9043 / HFP020203 / CcI3)).